Reading from the N-terminus, the 178-residue chain is Acireductone dioxygenase (178 aa).

Positions 100, 102, 106, and 145 each coordinate Fe(2+). Positions 100, 102, 106, and 145 each coordinate Ni(2+).

It belongs to the acireductone dioxygenase (ARD) family. As to quaternary structure, monomer. The cofactor is Fe(2+). Ni(2+) serves as cofactor.

The catalysed reaction is 1,2-dihydroxy-5-(methylsulfanyl)pent-1-en-3-one + O2 = 3-(methylsulfanyl)propanoate + CO + formate + 2 H(+). It carries out the reaction 1,2-dihydroxy-5-(methylsulfanyl)pent-1-en-3-one + O2 = 4-methylsulfanyl-2-oxobutanoate + formate + 2 H(+). The protein operates within amino-acid biosynthesis; L-methionine biosynthesis via salvage pathway; L-methionine from S-methyl-5-thio-alpha-D-ribose 1-phosphate: step 5/6. Catalyzes 2 different reactions between oxygen and the acireductone 1,2-dihydroxy-3-keto-5-methylthiopentene (DHK-MTPene) depending upon the metal bound in the active site. Fe-containing acireductone dioxygenase (Fe-ARD) produces formate and 2-keto-4-methylthiobutyrate (KMTB), the alpha-ketoacid precursor of methionine in the methionine recycle pathway. Ni-containing acireductone dioxygenase (Ni-ARD) produces methylthiopropionate, carbon monoxide and formate, and does not lie on the methionine recycle pathway. The chain is Acireductone dioxygenase from Bacillus velezensis (strain DSM 23117 / BGSC 10A6 / LMG 26770 / FZB42) (Bacillus amyloliquefaciens subsp. plantarum).